Reading from the N-terminus, the 188-residue chain is GMP synthase [glutamine-hydrolyzing] subunit A (188 aa).

Residues 1-188 (MIVIMDNGGQ…RNFAELCGEL (188 aa)) form the Glutamine amidotransferase type-1 domain. Cysteine 78 serves as the catalytic Nucleophile. Residues histidine 165 and glutamate 167 contribute to the active site.

In terms of assembly, heterodimer composed of a glutamine amidotransferase subunit (A) and a GMP-binding subunit (B).

The catalysed reaction is XMP + L-glutamine + ATP + H2O = GMP + L-glutamate + AMP + diphosphate + 2 H(+). It functions in the pathway purine metabolism; GMP biosynthesis; GMP from XMP (L-Gln route): step 1/1. Its function is as follows. Catalyzes the synthesis of GMP from XMP. The sequence is that of GMP synthase [glutamine-hydrolyzing] subunit A from Thermococcus kodakarensis (strain ATCC BAA-918 / JCM 12380 / KOD1) (Pyrococcus kodakaraensis (strain KOD1)).